The sequence spans 177 residues: Small ribosomal subunit protein uS5 (177 aa).

The 64-residue stretch at 21-84 (LLDRVVKIKR…KQASRSMIHV (64 aa)) folds into the S5 DRBM domain.

Belongs to the universal ribosomal protein uS5 family. Part of the 30S ribosomal subunit. Contacts proteins S4 and S8.

With S4 and S12 plays an important role in translational accuracy. In terms of biological role, located at the back of the 30S subunit body where it stabilizes the conformation of the head with respect to the body. The chain is Small ribosomal subunit protein uS5 from Rhodopirellula baltica (strain DSM 10527 / NCIMB 13988 / SH1).